An 806-amino-acid chain; its full sequence is Xylosyltransferase sqv-6 (806 aa).

At 1–11 the chain is on the cytoplasmic side; the sequence is MLFNGTTKYRD. Residues 12–32 traverse the membrane as a helical; Signal-anchor for type II membrane protein segment; sequence YAIVISLFFLLNVYLLYNTAQ. At 33 to 806 the chain is on the lumenal side; the sequence is HTQVGNSKHI…GYDEDTQTLI (774 aa). Cys-57 and Cys-85 are joined by a disulfide. 2 N-linked (GlcNAc...) asparagine glycosylation sites follow: Asn-89 and Asn-169. Disulfide bonds link Cys-101/Cys-445, Cys-464/Cys-478, and Cys-466/Cys-476. The 97-residue stretch at 109 to 205 folds into the WSC domain; it reads IDQRIGCFLD…FNAVEIFRTG (97 aa). Residues Asp-264 and 293-295 contribute to the UDP-alpha-D-xylose site; that span reads TIW. N-linked (GlcNAc...) asparagine glycosylation is present at Asn-325. 398 to 399 lines the UDP-alpha-D-xylose pocket; sequence DW. Residues Ser-479 and 505 to 506 each bind UDP-alpha-D-xylose; that span reads RK. Asn-614, Asn-655, and Asn-719 each carry an N-linked (GlcNAc...) asparagine glycan. Cys-772 and Cys-778 are oxidised to a cystine.

The protein belongs to the glycosyltransferase 14 family. XylT subfamily. Requires a divalent metal cation as cofactor.

It localises to the endoplasmic reticulum membrane. The protein resides in the golgi apparatus membrane. It catalyses the reaction UDP-alpha-D-xylose + L-seryl-[protein] = 3-O-(beta-D-xylosyl)-L-seryl-[protein] + UDP + H(+). The protein operates within glycan metabolism; chondroitin sulfate biosynthesis. It participates in glycan metabolism; heparan sulfate biosynthesis. Its function is as follows. Catalyzes the first step in biosynthesis of glycosaminoglycan. Transfers D-xylose from UDP-D-xylose to specific serine residues of the core protein. Required for vulval morphogenesis and zygotic cytokinesis, suggesting that glycosaminoglycans play a central role in vulval morphogenesis. The sequence is that of Xylosyltransferase sqv-6 from Caenorhabditis elegans.